Consider the following 473-residue polypeptide: Photosystem II CP43 reaction center protein (473 aa).

Residues 1–14 (MKTLYSLRRFYPVE) constitute a propeptide that is removed on maturation. N-acetylthreonine is present on T15. T15 is modified (phosphothreonine). 5 helical membrane-spanning segments follow: residues 69-93 (LFEVAHFVPEKPMYEQGLILLPHLA), 134-155 (LLGPETLEESFPFFGYVWKDRN), 178-200 (KALYFGGVYDTWAPGGGDVRKIT), 255-275 (KPFAWARRAFVWSGEAYLSYS), and 291-312 (WFNNTAYPSEFYGPTGPEASQA). Residue E367 coordinates [CaMn4O5] cluster. Residues 447-471 (RARAAAAGFEKGIDRDLEPVLSMTP) form a helical membrane-spanning segment.

The protein belongs to the PsbB/PsbC family. PsbC subfamily. As to quaternary structure, PSII is composed of 1 copy each of membrane proteins PsbA, PsbB, PsbC, PsbD, PsbE, PsbF, PsbH, PsbI, PsbJ, PsbK, PsbL, PsbM, PsbT, PsbX, PsbY, PsbZ, Psb30/Ycf12, at least 3 peripheral proteins of the oxygen-evolving complex and a large number of cofactors. It forms dimeric complexes. Binds multiple chlorophylls and provides some of the ligands for the Ca-4Mn-5O cluster of the oxygen-evolving complex. It may also provide a ligand for a Cl- that is required for oxygen evolution. PSII binds additional chlorophylls, carotenoids and specific lipids. serves as cofactor.

The protein localises to the plastid. The protein resides in the chloroplast thylakoid membrane. Its function is as follows. One of the components of the core complex of photosystem II (PSII). It binds chlorophyll and helps catalyze the primary light-induced photochemical processes of PSII. PSII is a light-driven water:plastoquinone oxidoreductase, using light energy to abstract electrons from H(2)O, generating O(2) and a proton gradient subsequently used for ATP formation. This chain is Photosystem II CP43 reaction center protein, found in Dioscorea elephantipes (Elephant's foot yam).